The sequence spans 1032 residues: GPI ethanolamine phosphate transferase 1 (1032 aa).

Topologically, residues 1 to 6 (MARLGR) are cytoplasmic. The helical transmembrane segment at 7-27 (FGFLALAVVFHLIYAYSIFDI) threads the bilayer. Topologically, residues 28–468 (YFVSPIVSGM…LQTYDWLFLR (441 aa)) are lumenal. N150 and N435 each carry an N-linked (GlcNAc...) asparagine glycan. A helical transmembrane segment spans residues 469–489 (TIITFGYLGWIAYALTTVIDL). The Cytoplasmic portion of the chain corresponds to 490 to 500 (HVLHRTSDSKR). A helical transmembrane segment spans residues 501-521 (TVGSTIFFTSILAALFSVLLY). At 522–523 (QK) the chain is on the lumenal side. A helical transmembrane segment spans residues 524–544 (SSWQYYVYGAFPIFFWEEVFA). Topologically, residues 545–564 (RRKALIAGREILLGHVRSFG) are cytoplasmic. The chain crosses the membrane as a helical span at residues 565–585 (GYIASGFQLVAFVAVLEALLM). At 586–596 (RHQVQSYFHRE) the chain is on the lumenal side. The chain crosses the membrane as a helical span at residues 597-617 (IYTVCFVLGSFWPILYGVDFV). Residues 618 to 622 (RQNTV) are Cytoplasmic-facing. A helical membrane pass occupies residues 623-643 (LSATWAVGCSLMSTFTLLPVI). Residues 644-647 (KVEN) are Lumenal-facing. Residues 648-668 (INTITYGALLMFFTGLFYLLF) traverse the membrane as a helical segment. Residues 669–688 (EDTILKHSKSSGHAPGAISS) lie on the Cytoplasmic side of the membrane. The chain crosses the membrane as a helical span at residues 689 to 709 (LGSRVIMGMQVGMVLLALIVT). The Lumenal portion of the chain corresponds to 710–722 (RSSVSSLQAKQGL). A helical transmembrane segment spans residues 723–743 (PFGNQVVGWFVLVASLVLPFF). The Cytoplasmic segment spans residues 744–766 (HRLYPNSHYLHRLMVLFLTFSPT). The chain crosses the membrane as a helical span at residues 767–787 (FIILTISYEGLFYFVFCMTLV). The Lumenal portion of the chain corresponds to 788 to 841 (TWVRLEHAIYVYTARSSAHYGGNNTVPKKPGLNATAVIDGQEYRYRRLGLADTR). N-linked (GlcNAc...) asparagine glycosylation is found at N810 and N820. The chain crosses the membrane as a helical span at residues 842 to 862 (VALFFFFLLQSAFFSTGNIAS). The Cytoplasmic segment spans residues 863 to 884 (VSSFSLESVFRLIPVFSPFSQS). The helical transmembrane segment at 885-905 (ALLILKLLIPFAIISANLGIL) threads the bilayer. Topologically, residues 906 to 914 (NRRLEVAPS) are lumenal. A helical transmembrane segment spans residues 915–935 (ALFMVVMSISDVMTLNFFYMV). At 936–951 (RDEGSWLDIGTTISHF) the chain is on the cytoplasmic side. Residues 952–972 (LIASFLCTFVAGLEFLSEVFI) traverse the membrane as a helical segment. The Lumenal segment spans residues 973 to 1032 (SGVDFGPTTKAIGASITKTVGGTAGSDVVDSQSGPEDAANSKKAEGLEGSETIRQNGGSV). The interval 994–1032 (GTAGSDVVDSQSGPEDAANSKKAEGLEGSETIRQNGGSV) is disordered.

Belongs to the PIGG/PIGN/PIGO family. PIGN subfamily.

Its subcellular location is the endoplasmic reticulum membrane. The protein operates within glycolipid biosynthesis; glycosylphosphatidylinositol-anchor biosynthesis. Its function is as follows. Ethanolamine phosphate transferase involved in glycosylphosphatidylinositol-anchor biosynthesis. Transfers ethanolamine phosphate to the first alpha-1,4-linked mannose of the glycosylphosphatidylinositol precursor of GPI-anchor. The protein is GPI ethanolamine phosphate transferase 1 (mcd4) of Aspergillus fumigatus (strain ATCC MYA-4609 / CBS 101355 / FGSC A1100 / Af293) (Neosartorya fumigata).